A 436-amino-acid chain; its full sequence is GTPase Der (436 aa).

2 consecutive EngA-type G domains span residues 4-167 and 176-351; these read PVVA…KNLP and VQFC…ENHA. GTP is bound by residues 10 to 17, 57 to 61, 119 to 122, 182 to 189, 229 to 233, and 294 to 297; these read GRPNVGKS, DTGGI, NKLD, DTAGM, and NKWD. The KH-like domain maps to 352-436; it reads MRVQTNILND…PIKIFARARK (85 aa).

The protein belongs to the TRAFAC class TrmE-Era-EngA-EngB-Septin-like GTPase superfamily. EngA (Der) GTPase family. Associates with the 50S ribosomal subunit.

GTPase that plays an essential role in the late steps of ribosome biogenesis. The chain is GTPase Der from Bacillus pumilus (strain SAFR-032).